The following is a 432-amino-acid chain: 3-phosphoshikimate 1-carboxyvinyltransferase (432 aa).

3-phosphoshikimate is bound by residues lysine 23, serine 24, and arginine 28. Lysine 23 is a phosphoenolpyruvate binding site. Phosphoenolpyruvate contacts are provided by glycine 95 and arginine 123. 3-phosphoshikimate is bound by residues serine 167, glutamine 169, aspartate 317, and lysine 344. Position 169 (glutamine 169) interacts with phosphoenolpyruvate. Aspartate 317 serves as the catalytic Proton acceptor. Phosphoenolpyruvate-binding residues include arginine 348 and arginine 390.

The protein belongs to the EPSP synthase family. In terms of assembly, monomer.

The protein resides in the cytoplasm. It catalyses the reaction 3-phosphoshikimate + phosphoenolpyruvate = 5-O-(1-carboxyvinyl)-3-phosphoshikimate + phosphate. It functions in the pathway metabolic intermediate biosynthesis; chorismate biosynthesis; chorismate from D-erythrose 4-phosphate and phosphoenolpyruvate: step 6/7. Its function is as follows. Catalyzes the transfer of the enolpyruvyl moiety of phosphoenolpyruvate (PEP) to the 5-hydroxyl of shikimate-3-phosphate (S3P) to produce enolpyruvyl shikimate-3-phosphate and inorganic phosphate. The polypeptide is 3-phosphoshikimate 1-carboxyvinyltransferase (Staphylococcus aureus (strain N315)).